A 208-amino-acid polypeptide reads, in one-letter code: MNSRFTSAFTPFAVSLGLLLVMTSAFPTPGPLGEDFKNDTTPGRLLLTTPEKTEALIKRMVDKISAMRKEICEKNDECESSKDTLAENKLNLPKMEEKDGCFQSGFNQAICLIRTTAGLLEYQIYLDYLQNEYEGNRENVRDLRKNIRTLIQILKQKIADLITTPATNTDLLEKMQSSNEWVKNAKIILILRNLENFLQFSLRAIRMK.

An N-terminal signal peptide occupies residues 1–29 (MNSRFTSAFTPFAVSLGLLLVMTSAFPTP). A glycan (N-linked (GlcNAc...) asparagine) is linked at Asn38. Cys72 and Cys78 are disulfide-bonded. Ser81 is modified (phosphoserine). An intrachain disulfide couples Cys101 to Cys111.

This sequence belongs to the IL-6 superfamily. Component of a hexamer of two molecules each of IL6, IL6R and IL6ST; first binds to IL6R to associate with the signaling subunit IL6ST. Interacts with IL6R (via the N-terminal ectodomain); this interaction may be affected by IL6R-binding with SORL1, hence decreasing IL6 cis signaling. Interacts with SORL1 (via the N-terminal ectodomain); this interaction leads to IL6 internalization and lysosomal degradation. May form a trimeric complex with the soluble SORL1 ectodomain and soluble IL6R receptor; this interaction might stabilize circulating IL6, hence promoting IL6 trans signaling.

Its subcellular location is the secreted. In terms of biological role, cytokine with a wide variety of biological functions in immunity, tissue regeneration, and metabolism. Binds to IL6R, then the complex associates to the signaling subunit IL6ST/gp130 to trigger the intracellular IL6-signaling pathway. The interaction with the membrane-bound IL6R and IL6ST stimulates 'classic signaling', whereas the binding of IL6 and soluble IL6R to IL6ST stimulates 'trans-signaling'. Alternatively, 'cluster signaling' occurs when membrane-bound IL6:IL6R complexes on transmitter cells activate IL6ST receptors on neighboring receiver cells. Its function is as follows. IL6 is a potent inducer of the acute phase response. Rapid production of IL6 contributes to host defense during infection and tissue injury, but excessive IL6 synthesis is involved in disease pathology. In the innate immune response, is synthesized by myeloid cells, such as macrophages and dendritic cells, upon recognition of pathogens through toll-like receptors (TLRs) at the site of infection or tissue injury. In the adaptive immune response, is required for the differentiation of B cells into immunoglobulin-secreting cells. Plays a major role in the differentiation of CD4(+) T cell subsets. Essential factor for the development of T follicular helper (Tfh) cells that are required for the induction of germinal-center formation. Required to drive naive CD4(+) T cells to the Th17 lineage. Also required for proliferation of myeloma cells and the survival of plasmablast cells. Acts as an essential factor in bone homeostasis and on vessels directly or indirectly by induction of VEGF, resulting in increased angiogenesis activity and vascular permeability. Induces, through 'trans-signaling' and synergistically with IL1B and TNF, the production of VEGF. Involved in metabolic controls, is discharged into the bloodstream after muscle contraction increasing lipolysis and improving insulin resistance. 'Trans-signaling' in central nervous system also regulates energy and glucose homeostasis. Mediates, through GLP-1, crosstalk between insulin-sensitive tissues, intestinal L cells and pancreatic islets to adapt to changes in insulin demand. Also acts as a myokine. Plays a protective role during liver injury, being required for maintenance of tissue regeneration. Also has a pivotal role in iron metabolism by regulating HAMP/hepcidin expression upon inflammation or bacterial infection. Through activation of IL6ST-YAP-NOTCH pathway, induces inflammation-induced epithelial regeneration. This is Interleukin-6 (IL6) from Bubalus bubalis (Domestic water buffalo).